A 714-amino-acid polypeptide reads, in one-letter code: Testis-expressed protein 13D (714 aa).

Disordered regions lie at residues 300 to 419 (GSFP…GCSD) and 431 to 675 (RRCK…PASF). Composition is skewed to basic and acidic residues over residues 307–320 (SRSHSQGEGSERSQ) and 366–378 (GNRERQNQKEGPK). Over residues 379–392 (RARRMHTLVFRRSH) the composition is skewed to basic residues. Residues 403–416 (TVPQGDSRSYSQEG) show a composition bias toward polar residues. 3 stretches are compositionally biased toward basic and acidic residues: residues 495–505 (CKPEEGPERPQ), 557–567 (CKPEEGPERPQ), and 636–646 (SRSHGVRESPK). Residues 677 to 706 (VPVNWKCPWCKAINFSWRTACYKCKKACVP) form a RanBP2-type zinc finger.

This sequence belongs to the TEX13 family.

The sequence is that of Testis-expressed protein 13D from Homo sapiens (Human).